We begin with the raw amino-acid sequence, 521 residues long: Peroxisomal membrane protein PEX23 (521 aa).

The disordered stretch occupies residues 1–26 (MPTDPNSNPVSKAGLTPSSINSNISE). N-linked (GlcNAc...) asparagine glycans are attached at residues Asn23 and Asn53. The next 2 helical transmembrane spans lie at 111 to 128 (SYISVLLVTTATLFILYF) and 133 to 150 (IYLGHLSIVGLIFLYSIF). Asn189 carries N-linked (GlcNAc...) asparagine glycosylation. Residues 198–217 (LLFTSIFLSPGYILVCYLLF) form a helical membrane-spanning segment. Residue Asn279 is glycosylated (N-linked (GlcNAc...) asparagine). The interval 425 to 446 (VSPGDDSSTDSASLPHSASETV) is disordered. Polar residues predominate over residues 429-446 (DDSSTDSASLPHSASETV). N-linked (GlcNAc...) asparagine glycosylation is found at Asn463 and Asn467. The segment at 465-486 (SGNITTSAETAPDSAGTAKKRK) is disordered.

It belongs to the PEX28-32 family. PEX32 subfamily.

The protein localises to the endoplasmic reticulum membrane. With PEX29, contributes to the formation of endoplasmic reticulum-mitochondria junctions which are important for mitochondrial function. Involved in lipid dropplets formation. The chain is Peroxisomal membrane protein PEX23 from Ogataea parapolymorpha (strain ATCC 26012 / BCRC 20466 / JCM 22074 / NRRL Y-7560 / DL-1) (Yeast).